A 545-amino-acid chain; its full sequence is Thermosome subunit alpha (545 aa).

Residues 522–545 are disordered; the sequence is KKSTPPSGQGGQGQGMPGGGMPEY. The span at 529-545 shows a compositional bias: gly residues; sequence GQGGQGQGMPGGGMPEY.

It belongs to the TCP-1 chaperonin family. Forms a Heterooligomeric complex of two stacked eight-membered rings. The N-terminus is blocked.

Molecular chaperone; binds unfolded polypeptides in vitro, and has a weak ATPase activity. The chain is Thermosome subunit alpha (thsA) from Thermoplasma acidophilum (strain ATCC 25905 / DSM 1728 / JCM 9062 / NBRC 15155 / AMRC-C165).